The following is a 229-amino-acid chain: Ribosome maturation factor RimM (229 aa).

The tract at residues 1–21 (MAGHDSGNAKRGRSPSFGVFV) is disordered. One can recognise a PRC barrel domain in the interval 148–229 (ADEFYWVDLI…RVVVDWEADY (82 aa)).

This sequence belongs to the RimM family. In terms of assembly, binds ribosomal protein uS19.

It is found in the cytoplasm. Its function is as follows. An accessory protein needed during the final step in the assembly of 30S ribosomal subunit, possibly for assembly of the head region. Essential for efficient processing of 16S rRNA. May be needed both before and after RbfA during the maturation of 16S rRNA. It has affinity for free ribosomal 30S subunits but not for 70S ribosomes. The protein is Ribosome maturation factor RimM of Burkholderia pseudomallei (strain 1106a).